A 185-amino-acid chain; its full sequence is Photosystem I assembly protein Ycf4 (185 aa).

2 helical membrane-spanning segments follow: residues 24-44 (YIIG…SISS) and 66-86 (IIMG…WYLV).

It belongs to the Ycf4 family.

The protein resides in the cellular thylakoid membrane. Seems to be required for the assembly of the photosystem I complex. In Prochlorococcus marinus (strain MIT 9301), this protein is Photosystem I assembly protein Ycf4.